We begin with the raw amino-acid sequence, 338 residues long: Adenylosuccinate synthetase (338 aa).

Residues 12-18 and 42-44 each bind GTP; these read GDEGKGK and GHT. Catalysis depends on Asp-13, which acts as the Proton acceptor. Residues Asp-13 and Gly-42 each coordinate Mg(2+). Residues 13-16, 40-43, Thr-127, Arg-141, Gln-179, Thr-194, and Arg-256 contribute to the IMP site; these read DEGK and NAGH. Catalysis depends on His-43, which acts as the Proton donor. Position 252 to 258 (252 to 258) interacts with substrate; it reads TVTGRRR. Residues Arg-258, 284–286, and 324–326 each bind GTP; these read CLD and STG.

It belongs to the adenylosuccinate synthetase family. As to quaternary structure, homodimer. Mg(2+) serves as cofactor.

Its subcellular location is the cytoplasm. The catalysed reaction is IMP + L-aspartate + GTP = N(6)-(1,2-dicarboxyethyl)-AMP + GDP + phosphate + 2 H(+). It functions in the pathway purine metabolism; AMP biosynthesis via de novo pathway; AMP from IMP: step 1/2. Its function is as follows. Plays an important role in the de novo pathway of purine nucleotide biosynthesis. Catalyzes the first committed step in the biosynthesis of AMP from IMP. This is Adenylosuccinate synthetase from Methanococcus maripaludis (strain C7 / ATCC BAA-1331).